We begin with the raw amino-acid sequence, 508 residues long: Probable cytosol aminopeptidase (508 aa).

2 residues coordinate Mn(2+): Lys-274 and Asp-279. Lys-286 is a catalytic residue. Asp-297, Asp-356, and Glu-358 together coordinate Mn(2+). The active site involves Arg-360.

This sequence belongs to the peptidase M17 family. Mn(2+) is required as a cofactor.

The protein localises to the cytoplasm. The enzyme catalyses Release of an N-terminal amino acid, Xaa-|-Yaa-, in which Xaa is preferably Leu, but may be other amino acids including Pro although not Arg or Lys, and Yaa may be Pro. Amino acid amides and methyl esters are also readily hydrolyzed, but rates on arylamides are exceedingly low.. It catalyses the reaction Release of an N-terminal amino acid, preferentially leucine, but not glutamic or aspartic acids.. In terms of biological role, presumably involved in the processing and regular turnover of intracellular proteins. Catalyzes the removal of unsubstituted N-terminal amino acids from various peptides. The chain is Probable cytosol aminopeptidase from Paraburkholderia phytofirmans (strain DSM 17436 / LMG 22146 / PsJN) (Burkholderia phytofirmans).